Reading from the N-terminus, the 387-residue chain is Alkanesulfonate monooxygenase (387 aa).

Residues 365 to 387 (HNSGPFGETVGNDYRPSRLASQS) are disordered.

This sequence belongs to the SsuD family.

The enzyme catalyses an alkanesulfonate + FMNH2 + O2 = an aldehyde + FMN + sulfite + H2O + 2 H(+). Catalyzes the desulfonation of aliphatic sulfonates. This is Alkanesulfonate monooxygenase from Bradyrhizobium diazoefficiens (strain JCM 10833 / BCRC 13528 / IAM 13628 / NBRC 14792 / USDA 110).